A 467-amino-acid chain; its full sequence is MSSKDQILEKDKKETDDNGNKKTTTTTSSSSSSSSSSKPRSNKFDKVIIKSNGVCYITEGVIGNGSFGVVTQAIVADTKEVVAIKKVLQDQRYKNRELQIMKMLNHINIVSLKNSFYTSDNDEVYLNLVLEYVPDTVYRVSRHYSMSKQPVPNIFVKLYIYQLCRSINYIHSLGICHRDIKPQNLLLDTSTSTLKLCDFGSAKILIKGETNVSYICSRHYRAPELIFGSTNYTTTIDVWSLGCVLAELLLGQPLFPGENGIDQLVEIIKVLGTPTKEQIHAMNPYYTSFKFPEIKANPWPRVFKAKDVPAESIDLISKILLYDPSSRLKPVEICAHPFFDELRDPKTCLPDGKPLPPLFNFTIAEQTSIGPKLAKTLIPSHAMNQIELPSPLFPNLAISSSNQSSSSNSNANVSSNLNSHSASPSTTSSSSSTPNSIPVQSPSTTNTTSSTTNNTTTTTTTTTTSNH.

Residues Met1–Asn20 show a composition bias toward basic and acidic residues. A disordered region spans residues Met1 to Asn42. Residues Thr23–Ser37 show a composition bias toward low complexity. The 284-residue stretch at Tyr56 to Phe339 folds into the Protein kinase domain. Residues Ile62–Val70 and Lys85 contribute to the ATP site. Asp179 serves as the catalytic Proton acceptor. Phosphotyrosine; by zakA is present on residues Tyr214 and Tyr220. Residues Ser400–His467 are disordered.

The protein belongs to the protein kinase superfamily. CMGC Ser/Thr protein kinase family. GSK-3 subfamily. Mg(2+) serves as cofactor.

The enzyme catalyses L-seryl-[tau protein] + ATP = O-phospho-L-seryl-[tau protein] + ADP + H(+). It carries out the reaction L-threonyl-[tau protein] + ATP = O-phospho-L-threonyl-[tau protein] + ADP + H(+). Its activity is regulated as follows. Inhibited by lithium. Lithium inhibition is competitive with respect to magnesium but non-competitive with respect to the peptide substrate. Functionally, during cellular differentiation, may mediate an extracellular cyclic AMP stimulated signal transduction pathway that regulates prespore and prestalk B-cell proportions through inhibition of stalk cell formation and induction of prespore cell differentiation. The cAMP receptor carC appears to activate gskA via the tyrosine kinases zakA and zak2, to stimulate prespore differentiation, while carD appears to negatively regulate gskA, to promote prestalk formation. In Dictyostelium discoideum (Social amoeba), this protein is Glycogen synthase kinase-3 (gskA).